The primary structure comprises 235 residues: Aspartate/glutamate leucyltransferase (235 aa).

This sequence belongs to the R-transferase family. Bpt subfamily.

The protein resides in the cytoplasm. The catalysed reaction is N-terminal L-glutamyl-[protein] + L-leucyl-tRNA(Leu) = N-terminal L-leucyl-L-glutamyl-[protein] + tRNA(Leu) + H(+). It carries out the reaction N-terminal L-aspartyl-[protein] + L-leucyl-tRNA(Leu) = N-terminal L-leucyl-L-aspartyl-[protein] + tRNA(Leu) + H(+). Its function is as follows. Functions in the N-end rule pathway of protein degradation where it conjugates Leu from its aminoacyl-tRNA to the N-termini of proteins containing an N-terminal aspartate or glutamate. The protein is Aspartate/glutamate leucyltransferase of Shewanella putrefaciens (strain CN-32 / ATCC BAA-453).